Reading from the N-terminus, the 310-residue chain is Olfactory receptor 10N1 (310 aa).

Over 1–23 (MDNYTLLNEFILLGIPQTQGLET) the chain is Extracellular. Asn-3 is a glycosylation site (N-linked (GlcNAc...) asparagine). The helical transmembrane segment at 24-44 (LLFVVFLFIYFFTLLGNSLIF) threads the bilayer. The Cytoplasmic segment spans residues 45–55 (TAIISSSTLHT). Residues 56–76 (PMYFFLGLLSVFDMLFPSVTC) form a helical membrane-spanning segment. The Extracellular portion of the chain corresponds to 77-95 (PKMLFYLSVRSPAISYKGC). Cys-95 and Cys-187 form a disulfide bridge. The chain crosses the membrane as a helical span at residues 96 to 116 (AAQLFFYHLLGSTEGCLYSVM). The Cytoplasmic portion of the chain corresponds to 117–136 (AYDRYVAICHPLRYMLIMKP). A helical transmembrane segment spans residues 137-157 (GVCVSLVIIAWLVGCLHATIL). Residues 158-202 (TSLTFQLVYCASNQVDYFFCDLPAVLPLACTDSKLARKVGSINVG) are Extracellular-facing. The helical transmembrane segment at 203-223 (FLALMLLFSVCVSYVHIGVAI) threads the bilayer. At 224–237 (LRIRSAEGRQKAFS) the chain is on the cytoplasmic side. A helical membrane pass occupies residues 238–258 (TCSAHLTAILCAYGPVIIIYL). The Extracellular portion of the chain corresponds to 259–264 (QRTPNP). Residues 265-285 (LLGAVVQILNNIVSPMLNSLI) form a helical membrane-spanning segment. Topologically, residues 286-310 (YSLRNKEVKRSLRRVFQNITFHGQK) are cytoplasmic.

This sequence belongs to the G-protein coupled receptor 1 family.

It localises to the cell membrane. In terms of biological role, odorant receptor. In Mus musculus (Mouse), this protein is Olfactory receptor 10N1.